The chain runs to 499 residues: Serine/threonine protein phosphatase 2A 57 kDa regulatory subunit B' beta isoform (499 aa).

Basic residues predominate over residues 1–13 (MFKKIMKGGHRKP). The tract at residues 1-65 (MFKKIMKGGH…PVTATPPPPP (65 aa)) is disordered.

Belongs to the phosphatase 2A regulatory subunit B56 family. As to quaternary structure, PP2A consists of a common heteromeric enzyme, composed of a catalytic subunit (subunits C), a constant regulatory subunit (subunit A), and a variety of regulatory subunits such as subunits B (the R2/B/PR55/B55, R3/B''/PR72/PR130/PR59 and R5/B'/B56 families). Interacts with BZR1. Interacts with BRI1. Interacts with SRK2E/OST1. In terms of tissue distribution, expressed ubiquitously, higher levels in cotyledons and flowers.

The protein localises to the nucleus. Its subcellular location is the cytoplasm. The B regulatory subunit may modulate substrate selectivity and catalytic activity, and may also direct the localization of the catalytic enzyme to a particular subcellular compartment. Required for the formation of the PP2A holoenzyme that positively regulates brassinosteroid signaling by dephosphorylating and activating BZR1. This chain is Serine/threonine protein phosphatase 2A 57 kDa regulatory subunit B' beta isoform (B'BETA), found in Arabidopsis thaliana (Mouse-ear cress).